A 403-amino-acid polypeptide reads, in one-letter code: Tripartite motif-containing protein 59 (403 aa).

The RING-type zinc-finger motif lies at cysteine 10 to arginine 60. The segment at proline 92–leucine 134 adopts a B box-type zinc-finger fold. Cysteine 97, histidine 100, cysteine 120, and histidine 126 together coordinate Zn(2+). The stretch at leucine 163–serine 246 forms a coiled coil. Residues isoleucine 329–asparagine 349 form a helical membrane-spanning segment.

The protein belongs to the TRIM/RBCC family. Interacts with ECSIT.

The protein resides in the endoplasmic reticulum membrane. The enzyme catalyses S-ubiquitinyl-[E2 ubiquitin-conjugating enzyme]-L-cysteine + [acceptor protein]-L-lysine = [E2 ubiquitin-conjugating enzyme]-L-cysteine + N(6)-ubiquitinyl-[acceptor protein]-L-lysine.. It functions in the pathway protein modification; protein ubiquitination. E3 ubiquitin ligase involved in different processes such as development and immune response. Serves as a negative regulator for innate immune signaling pathways by suppressing RLR-induced activation of IRF3/7 and NF-kappa-B via interaction with adapter ECSIT. Regulates autophagy through modulating both the transcription and the ubiquitination of BECN1. On the one hand, regulates the transcription of BECN1 through negatively modulating the NF-kappa-B pathway. On the other hand, regulates TRAF6-mediated 'Lys-63'-linked ubiquitination of BECN1, thus affecting the formation of the BECN1-PIK3C3 complex. In addition, mediates 'Lys-48'-linked ubiquitination of TRAF6 and thereby promotes TRAF6 proteasomal degradation. Also acts as a critical regulator for early embryo development from blastocyst stage to gastrula through modulating F-actin assembly and WASH1 'Lys-63'-linked ubiquitination. The sequence is that of Tripartite motif-containing protein 59 (TRIM59) from Homo sapiens (Human).